The primary structure comprises 557 residues: Formate--tetrahydrofolate ligase 2 (557 aa).

Thr66 to Thr73 contacts ATP.

This sequence belongs to the formate--tetrahydrofolate ligase family.

The catalysed reaction is (6S)-5,6,7,8-tetrahydrofolate + formate + ATP = (6R)-10-formyltetrahydrofolate + ADP + phosphate. Its pathway is one-carbon metabolism; tetrahydrofolate interconversion. The protein is Formate--tetrahydrofolate ligase 2 of Streptococcus pyogenes serotype M12 (strain MGAS9429).